The sequence spans 571 residues: MSFKMTQNQYTSLYGPTVGDSIRLGDTNLFAQIEKDYAVYGEEATFGGGKSIRDGMAQNPRVTRDDVNVADLVISNAVIIDYDKVVKADIGIKNGYIFAIGNAGNPDIMDNVDIIIGSTTDIIAAEGKIVTAGGIDTHVHFINPEQAEVALESGITTHIGGGTGASEGSKATTVTPGPWHIHRMLEAAEGLPINVGFTGKGQATNPTALIEQINAGAIGLKVHEDWGATPSALSHALDVADEFDVQIALHADTLNEAGFMEDTMAAVKDRVLHMYHTEGAGGGHAPDLIKSAAFSNILPSSTNPTLPYTHNTVDEHLDMVMITHHLNAAIPEDIAFADSRIRKETIAAEDVLQDMGVFSMISSDSQAMGRVGEVITRTWQVAHRMKEQRGPLDGDFEHNDNNRIKRYIAKYTINPAITHGISEYVGSIEPGKLADIVLWDPIFFGVKPELVVKGGLINSAVNGDANGSIPTSEPMKYRKMYGQYGGNLTSTSMTFVSKTAYENGINRALNLKRMVRPVKNIRQLSKADMKNNSATPKLDVDPQTYEVYVDGEKITSNAATELPLTQRYFLF.

The Urease domain maps to 133 to 571; that stretch reads GGIDTHVHFI…LPLTQRYFLF (439 aa). Residues histidine 138, histidine 140, and lysine 221 each contribute to the Ni(2+) site. Lysine 221 is modified (N6-carboxylysine). Histidine 223 provides a ligand contact to substrate. Ni(2+) contacts are provided by histidine 250 and histidine 276. Histidine 324 serves as the catalytic Proton donor. Aspartate 364 contributes to the Ni(2+) binding site.

This sequence belongs to the metallo-dependent hydrolases superfamily. Urease alpha subunit family. In terms of assembly, heterotrimer of UreA (gamma), UreB (beta) and UreC (alpha) subunits. Three heterotrimers associate to form the active enzyme. Requires Ni cation as cofactor. Carboxylation allows a single lysine to coordinate two nickel ions.

It is found in the cytoplasm. It catalyses the reaction urea + 2 H2O + H(+) = hydrogencarbonate + 2 NH4(+). Its pathway is nitrogen metabolism; urea degradation; CO(2) and NH(3) from urea (urease route): step 1/1. The protein is Urease subunit alpha of Staphylococcus aureus (strain USA300).